A 135-amino-acid chain; its full sequence is Race-specific elicitor A4 (135 aa).

An N-terminal signal peptide occupies residues 1–18 (MHYTTLLLSTLLVGTALA). The propeptide occupies 19–29 (QPTNPPAKTPK). Residues 19 to 39 (QPTNPPAKTPKKAPKTQPYNP) are disordered. A Chitin-binding type-2 domain is found at 47-111 (DTKCMGPKDC…DYPNLSTCPV (65 aa)). A disulfide bond links Cys86 and Cys101. The interval 112–135 (KTPQPKPKKGGVGGKKASVGHPGY) is disordered.

Functionally, this necrosis-inducing peptide induces a hypersensitive response on Cf-4 tomato genotypes. Race-specific elicitors are compounds which only induce defense responses in genotypes of host plants which are resistant to the pathogenic race that produces the elicitor, but not in susceptible genotypes. This Passalora fulva (Tomato leaf mold) protein is Race-specific elicitor A4 (AVR4).